The primary structure comprises 297 residues: uncharacterized protein (297 aa).

Glu46 is a catalytic residue.

It belongs to the PhzF family. As to quaternary structure, homodimer and homotetramer.

This is an uncharacterized protein from Escherichia coli O157:H7.